Consider the following 110-residue polypeptide: MSDTFQRIAPEQARQLRENGAQVVDIRDPQSFAVGHISGSRHIDNHSVADFIAAADLDAPLVVVCYHGNSSQSAAAYFIQQGFSDVYSLDGGFELWRSVYPADTSSGEAE.

The Rhodanese domain maps to 17–105; sequence RENGAQVVDI…WRSVYPADTS (89 aa). Cys65 acts as the Cysteine persulfide intermediate in catalysis.

The protein belongs to the GlpE family.

It is found in the cytoplasm. The enzyme catalyses thiosulfate + hydrogen cyanide = thiocyanate + sulfite + 2 H(+). The catalysed reaction is thiosulfate + [thioredoxin]-dithiol = [thioredoxin]-disulfide + hydrogen sulfide + sulfite + 2 H(+). Its function is as follows. Transferase that catalyzes the transfer of sulfur from thiosulfate to thiophilic acceptors such as cyanide or dithiols. May function in a CysM-independent thiosulfate assimilation pathway by catalyzing the conversion of thiosulfate to sulfite, which can then be used for L-cysteine biosynthesis. The chain is Thiosulfate sulfurtransferase GlpE from Pseudomonas aeruginosa (strain LESB58).